Here is a 188-residue protein sequence, read N- to C-terminus: Protease-associated domain-containing protein 1 (188 aa).

A signal peptide spans 1 to 21 (MSRGAAGWCCLVLWLPTCVAA). The PA domain occupies 83-163 (IQDQIALVER…RSLEQHGLPW (81 aa)). N-linked (GlcNAc...) asparagine glycans are attached at residues Asn121 and Asn171.

N-glycosylated; required for efficient secretion. As to expression, expressed in metabolically active tissues such as liver, muscle, adipose, and heart and different brain regions like cortex and hypothalamus, expression is acutely regulated by the nutritional state.

It is found in the secreted. Functionally, plays a role in the modulation of physical activity and adiposity. This chain is Protease-associated domain-containing protein 1, found in Mus musculus (Mouse).